The following is a 337-amino-acid chain: Anthranilate phosphoribosyltransferase (337 aa).

5-phospho-alpha-D-ribose 1-diphosphate is bound by residues Gly81, 84 to 85, Thr89, 91 to 94, 109 to 117, and Thr121; these read GD, NIST, and KHGNRALSS. Position 81 (Gly81) interacts with anthranilate. Position 93 (Ser93) interacts with Mg(2+). An anthranilate-binding site is contributed by Asn112. Arg167 is an anthranilate binding site. Mg(2+) contacts are provided by Asp225 and Glu226.

Belongs to the anthranilate phosphoribosyltransferase family. In terms of assembly, homodimer. Mg(2+) is required as a cofactor.

It carries out the reaction N-(5-phospho-beta-D-ribosyl)anthranilate + diphosphate = 5-phospho-alpha-D-ribose 1-diphosphate + anthranilate. It participates in amino-acid biosynthesis; L-tryptophan biosynthesis; L-tryptophan from chorismate: step 2/5. Functionally, catalyzes the transfer of the phosphoribosyl group of 5-phosphorylribose-1-pyrophosphate (PRPP) to anthranilate to yield N-(5'-phosphoribosyl)-anthranilate (PRA). The protein is Anthranilate phosphoribosyltransferase of Sinorhizobium medicae (strain WSM419) (Ensifer medicae).